Here is a 245-residue protein sequence, read N- to C-terminus: MQWQDHGMIVSMTPYGDTRSILSVFTRNHGICNAMIRLNKKKQSLQIGDRVCVTWRARLANNLGYFNSCEIISSAFYAYFQDHSKLLCLSSVTSTIYKSVPTNDAHPILYDYLIEFAEAAECGGHWYNEYLKLELEILSQLGFALDLSRCAVYHCEDNLLYISPKTGRAISERAGVSYRHLLFPLPQILRDLHNGTHTEQCSRKEFLLCLQILGYFLHRHLLSDDSKFLEQRKEMTALIYEEEAF.

Belongs to the RecO family.

In terms of biological role, involved in DNA repair and RecF pathway recombination. This chain is DNA repair protein RecO, found in Anaplasma phagocytophilum (strain HZ).